Reading from the N-terminus, the 424-residue chain is Glutamate-1-semialdehyde 2,1-aminomutase (424 aa).

An N6-(pyridoxal phosphate)lysine modification is found at Lys268.

This sequence belongs to the class-III pyridoxal-phosphate-dependent aminotransferase family. HemL subfamily. Requires pyridoxal 5'-phosphate as cofactor.

It is found in the cytoplasm. It catalyses the reaction (S)-4-amino-5-oxopentanoate = 5-aminolevulinate. It participates in porphyrin-containing compound metabolism; protoporphyrin-IX biosynthesis; 5-aminolevulinate from L-glutamyl-tRNA(Glu): step 2/2. The sequence is that of Glutamate-1-semialdehyde 2,1-aminomutase from Methanosarcina acetivorans (strain ATCC 35395 / DSM 2834 / JCM 12185 / C2A).